Here is a 335-residue protein sequence, read N- to C-terminus: Glyceraldehyde-3-phosphate dehydrogenase 2 (335 aa).

NAD(+) is bound by residues 13–14 and Gly-111; that span reads TI. 140-142 provides a ligand contact to D-glyceraldehyde 3-phosphate; sequence SCN. Cys-141 functions as the Nucleophile in the catalytic mechanism. An NAD(+)-binding site is contributed by Arg-169. D-glyceraldehyde 3-phosphate-binding positions include Thr-171 and 195–196; that span reads HG. NAD(+) is bound at residue Gln-300.

This sequence belongs to the glyceraldehyde-3-phosphate dehydrogenase family. As to quaternary structure, homotetramer.

Its subcellular location is the cytoplasm. It carries out the reaction D-glyceraldehyde 3-phosphate + phosphate + NADP(+) = (2R)-3-phospho-glyceroyl phosphate + NADPH + H(+). The catalysed reaction is D-glyceraldehyde 3-phosphate + phosphate + NAD(+) = (2R)-3-phospho-glyceroyl phosphate + NADH + H(+). Its pathway is carbohydrate degradation; glycolysis; pyruvate from D-glyceraldehyde 3-phosphate: step 1/5. The protein is Glyceraldehyde-3-phosphate dehydrogenase 2 (gapB) of Methanosarcina acetivorans (strain ATCC 35395 / DSM 2834 / JCM 12185 / C2A).